The chain runs to 122 residues: Small ribosomal subunit protein bS16 (122 aa).

A disordered region spans residues 87-122 (AQSNPKKALPKKKAQERAAASAAAAEKAAAAAAPEA). A compositionally biased stretch (low complexity) spans 103–122 (RAAASAAAAEKAAAAAAPEA).

Belongs to the bacterial ribosomal protein bS16 family.

This chain is Small ribosomal subunit protein bS16, found in Methylocella silvestris (strain DSM 15510 / CIP 108128 / LMG 27833 / NCIMB 13906 / BL2).